We begin with the raw amino-acid sequence, 286 residues long: Pyridoxal kinase PdxY (286 aa).

Residue Ser-8 coordinates substrate. Asp-110 and Glu-147 together coordinate ATP. A substrate-binding site is contributed by Asp-223.

The protein belongs to the pyridoxine kinase family. PdxY subfamily. As to quaternary structure, homodimer. It depends on Mg(2+) as a cofactor.

The catalysed reaction is pyridoxal + ATP = pyridoxal 5'-phosphate + ADP + H(+). It participates in cofactor metabolism; pyridoxal 5'-phosphate salvage; pyridoxal 5'-phosphate from pyridoxal: step 1/1. Its function is as follows. Pyridoxal kinase involved in the salvage pathway of pyridoxal 5'-phosphate (PLP). Catalyzes the phosphorylation of pyridoxal to PLP. The sequence is that of Pyridoxal kinase PdxY from Granulibacter bethesdensis (strain ATCC BAA-1260 / CGDNIH1).